Reading from the N-terminus, the 289-residue chain is ATP synthase subunit a (289 aa).

Helical transmembrane passes span 43–63 (AFHV…VLIF), 101–121 (SAVI…MNAV), 160–180 (LSVF…GGFI), 193–213 (IFVQ…TLIA), 232–252 (VFIL…GLGI), and 259–279 (AVFH…LTIV).

Belongs to the ATPase A chain family. As to quaternary structure, F-type ATPases have 2 components, CF(1) - the catalytic core - and CF(0) - the membrane proton channel. CF(1) has five subunits: alpha(3), beta(3), gamma(1), delta(1), epsilon(1). CF(0) has three main subunits: a(1), b(2) and c(9-12). The alpha and beta chains form an alternating ring which encloses part of the gamma chain. CF(1) is attached to CF(0) by a central stalk formed by the gamma and epsilon chains, while a peripheral stalk is formed by the delta and b chains.

The protein localises to the cell inner membrane. In terms of biological role, key component of the proton channel; it plays a direct role in the translocation of protons across the membrane. The chain is ATP synthase subunit a from Pseudomonas syringae pv. tomato (strain ATCC BAA-871 / DC3000).